We begin with the raw amino-acid sequence, 342 residues long: Phosphate acyltransferase (342 aa).

It belongs to the PlsX family. As to quaternary structure, homodimer. Probably interacts with PlsY.

The protein localises to the cytoplasm. It catalyses the reaction a fatty acyl-[ACP] + phosphate = an acyl phosphate + holo-[ACP]. Its pathway is lipid metabolism; phospholipid metabolism. Catalyzes the reversible formation of acyl-phosphate (acyl-PO(4)) from acyl-[acyl-carrier-protein] (acyl-ACP). This enzyme utilizes acyl-ACP as fatty acyl donor, but not acyl-CoA. This Shewanella sediminis (strain HAW-EB3) protein is Phosphate acyltransferase.